A 167-amino-acid chain; its full sequence is Claudin domain-containing protein 2 (167 aa).

4 helical membrane passes run leucine 7–alanine 27, leucine 59–methionine 79, threonine 96–valine 116, and tryptophan 134–methionine 154.

Belongs to the PMP-22/EMP/MP20 family.

Its subcellular location is the membrane. In Homo sapiens (Human), this protein is Claudin domain-containing protein 2 (CLDND2).